A 654-amino-acid polypeptide reads, in one-letter code: MSLAAYCVICCRRIGSFAPRSKSRTPWRNIRNIIRFTGSLIVGGSLFITYEVLALKKSLMLDTQVVEREKMKSYIYVHKAPVDRLDNRGIVWQARKELHRAVRKLLAAAAKVLRSPFADSFSTVDIEDHDCAVWLLLRKSREDDLAARLQAVREMSEAHHWHDYQYRIIAQACDPRTLIGLARSKESDLRFFLPPPPLPSLKEDSSTEEELRHLLASLPQTELDECLQYFTSLALSESSQSLAAQKGGLWCFGGNGLPYAESFGKVPSATVEMFCLEAIVKHSEIPSHCDHIEAGGGLQLLQRLYQLHKDCPKVQRNVMRIIGNMALNEHLHPAIVHSGWVSLMAEALKSSHIMEASHAARTLANLDRETVGEKYQDGVYVLHPQCRTSQPIKADVLFIHGLMGAAFKTWRQHDSQRALTESAVVDEDRYTTCWPKTWLAKDCPSLRIISVEYDTSLSDWRARCPMERKSIAFRSNELLSKLRAAGVGDRPMIWISHSMGGLLVKKMLLEASKKPELNALINNTRGIIFYSVPHHGSRLAEYSVNIRYLLFPSLEVKELSKDSPALKTLQDDFLEFAKDKNFQVLNFVETQPTFIGSMIKLHVVPVESADLGIGDLIPVDVNHLNICKPKTKDAFLYQRTLQFICETLARDLEN.

The chain crosses the membrane as a helical span at residues 32–54 (NIIRFTGSLIVGGSLFITYEVLA).

It belongs to the SERAC1 family. As to expression, testis. Higher expression at both mRNA and protein levels in brain and skeletal muscles, than in other organs.

It localises to the mitochondrion membrane. The protein localises to the endoplasmic reticulum. It is found in the mitochondrion. Its function is as follows. Facilitates the transport of serine from the cytosol to the mitochondria by interacting with and stabilizing Sideroflexin-1 (SFXN1), a mitochondrial serine transporter, playing a fundamental role in the one-carbon cycle responsible for the synthesis of nucleotides needed for mitochondrial DNA replication. Plays an important role in the phosphatidylglycerol (PG) remodeling that is essential for both mitochondrial function and intracellular cholesterol trafficking. Specifically involved in the exchange of the sn-1 acyl chain from PG 16:0/18:1(9Z) (also known as 1-hexadecanoyl-2-(9Z-octadecenoyl)-sn-glycero-3-phospho-(1'-sn-glycerol)) to PG 18:0/18:1(9Z) (also known as 1-octadecanoyl-2-(9Z-octadecenoyl)-sn-glycero-3-phospho-(1'-sn-glycerol)), a step needed in the bis(monoacylglycerol)phosphate biosynthetic pathway. May have acyltransferase activity although the mechanism for PG remodeling has not been determined. This chain is Protein SERAC1 (Serac1), found in Mus musculus (Mouse).